We begin with the raw amino-acid sequence, 66 residues long: Large ribosomal subunit protein bL35 (66 aa).

This sequence belongs to the bacterial ribosomal protein bL35 family.

The polypeptide is Large ribosomal subunit protein bL35 (Synechococcus sp. (strain ATCC 27144 / PCC 6301 / SAUG 1402/1) (Anacystis nidulans)).